Here is a 234-residue protein sequence, read N- to C-terminus: Uridylate kinase (234 aa).

9–12 (KLSG) serves as a coordination point for ATP. Residue Gly51 coordinates UMP. Positions 52 and 56 each coordinate ATP. Residues Asp71 and 132 to 139 (CGNPFFTT) contribute to the UMP site. The ATP site is built by Thr159, Tyr165, and Asp168.

This sequence belongs to the UMP kinase family. As to quaternary structure, homohexamer.

Its subcellular location is the cytoplasm. It catalyses the reaction UMP + ATP = UDP + ADP. It functions in the pathway pyrimidine metabolism; CTP biosynthesis via de novo pathway; UDP from UMP (UMPK route): step 1/1. With respect to regulation, inhibited by UTP. Its function is as follows. Catalyzes the reversible phosphorylation of UMP to UDP. This chain is Uridylate kinase, found in Prochlorococcus marinus (strain MIT 9301).